We begin with the raw amino-acid sequence, 688 residues long: DNA ligase (688 aa).

Residues 42 to 46 (DAEYD), 91 to 92 (SL), and Glu128 contribute to the NAD(+) site. Lys130 (N6-AMP-lysine intermediate) is an active-site residue. NAD(+)-binding residues include Arg151, Glu188, Lys305, and Lys329. Zn(2+) is bound by residues Cys423, Cys426, Cys441, and Cys447. Residues 608–688 (APQGVLAGKT…GMRKLLEGQL (81 aa)) enclose the BRCT domain.

This sequence belongs to the NAD-dependent DNA ligase family. LigA subfamily. Mg(2+) is required as a cofactor. The cofactor is Mn(2+).

The enzyme catalyses NAD(+) + (deoxyribonucleotide)n-3'-hydroxyl + 5'-phospho-(deoxyribonucleotide)m = (deoxyribonucleotide)n+m + AMP + beta-nicotinamide D-nucleotide.. DNA ligase that catalyzes the formation of phosphodiester linkages between 5'-phosphoryl and 3'-hydroxyl groups in double-stranded DNA using NAD as a coenzyme and as the energy source for the reaction. It is essential for DNA replication and repair of damaged DNA. The sequence is that of DNA ligase from Paraburkholderia xenovorans (strain LB400).